The primary structure comprises 129 residues: M-zodatoxin-Lt8g (129 aa).

The signal sequence occupies residues methionine 1–serine 20. Positions lysine 21–arginine 60 are excised as a propeptide. Residues glutamate 57 to arginine 60 carry the Processing quadruplet motif motif.

In terms of processing, cleavage of the propeptide depends on the processing quadruplet motif (XXXR, with at least one of X being E). Expressed by the venom gland.

Its subcellular location is the secreted. In terms of biological role, insecticidal, cytolytic and antimicrobial peptide. Has insecticidal activity against the flesh fly S.carnaria. Has antibacterial activity against the Gram-negative bacteria E.coli. Forms voltage-dependent, ion-permeable channels in membranes. At high concentration causes cell membrane lysis. The protein is M-zodatoxin-Lt8g (cit 1-8) of Lachesana tarabaevi (Spider).